Reading from the N-terminus, the 227-residue chain is GFP-like non-fluorescent chromoprotein (227 aa).

The 2-iminomethyl-5-imidazolinone (Glu-Gly) cross-link spans 63–65; that stretch reads EYG. Tyr-64 is modified (2,3-didehydrotyrosine).

Belongs to the GFP family. As to quaternary structure, homotetramer. In terms of processing, contains a chromophore consisting of modified amino acid residues. The chromophore is formed by autocatalytic backbone condensation between Xaa-N and Gly-(N+2), oxidation of Tyr-(N+1) to didehydrotyrosine, and formation of a double bond to the alpha-amino nitrogen of residue Xaa-N. Maturation of the chromophore requires nothing other than molecular oxygen. The precise stereochemistry of the tyrosine has not been determined.

Non-fluorescent pigment protein that is lilac in color. This chain is GFP-like non-fluorescent chromoprotein, found in Radianthus crispa (Leathery sea anemone).